Consider the following 374-residue polypeptide: MFEMGPVGTRLPAMTSPAHNHYSYHSPTSSDRGRSRQNSDAMDIQSITEREPATRYAVAGGPAPWNRNGSPSMSPMYSNNSERNQFHEENGRTYHGFRRGMYFLPCDEQEQDRLDIFHKLFTVARVSESLIYAPHPTNGRFLDLGCGTGIWAIEVANKYPDAFVAGVDLAPIQPPNHPKNCEFYAPFDFEAPWAMGEDSWDLIHLQMGCGSVMGWPNLYRRIFAHLRPGAWFEQVEIDFEPRCDDRSLDGTALRHWYDCLKQATAETMRPIAHSSRDTIKDLQDAGFTEIDHQIVGLPLNPWHQDEHERKVARWYNLAVSESIENLSLAPFSRVYRWPLERIQQLAADVKSEAFNKEIHAYNILHIYQARKPLR.

Positions 1-75 (MFEMGPVGTR…NRNGSPSMSP (75 aa)) are disordered. The span at 23 to 40 (SYHSPTSSDRGRSRQNSD) shows a compositional bias: polar residues. An S-methylmethionine modification is found at Met207.

This sequence belongs to the methyltransferase superfamily. LaeA methyltransferase family. As to quaternary structure, component of the heterotrimeric velvet complex composed of laeA, veA and velB; VeA acting as a bridging protein between laeA and velB. In terms of processing, self-methylates at Met-207.

The protein resides in the nucleus. It catalyses the reaction L-methionyl-[protein] + S-adenosyl-L-methionine = S-methyl-L-methionyl-[protein] + S-adenosyl-L-homocysteine. Methyltransferase that performs automethylation at Met-207. No other methyl-accepting substrate has been identified yet. Component of the velvet transcription factor complex that acts as a global regulator for secondary metabolite gene expression. Controls the expression of the sterigmatocystin, penicillin, and lovastatin gene clusters. Controls light-dependent formation of the velB-vosA complex, veA protein modification, and is required for light-mediated inhibition of sexual development. Within the velvet complex, controls light-dependent secondary metabolism. Involved in the defense response against Drosophila melanogaster larval grazing. The polypeptide is Secondary metabolism regulator laeA (Emericella nidulans (Aspergillus nidulans)).